Here is a 92-residue protein sequence, read N- to C-terminus: MSRTVFCQYQQCDTEGLDFAPYPGELGQRIFAQIGKAGWQAWLAHQTMLINENRLSPRDPKHRAFLEAELQKFLFERNADKPEGYVDPLGEE.

The protein belongs to the Fe(2+)-trafficking protein family.

Functionally, could be a mediator in iron transactions between iron acquisition and iron-requiring processes, such as synthesis and/or repair of Fe-S clusters in biosynthetic enzymes. This chain is Probable Fe(2+)-trafficking protein, found in Xanthomonas campestris pv. campestris (strain 8004).